Consider the following 148-residue polypeptide: Deoxyuridine 5'-triphosphate nucleotidohydrolase (148 aa).

Substrate-binding positions include 67 to 69 (RSG), Asn-80, 84 to 86 (LID), and Met-94.

Belongs to the dUTPase family. The cofactor is Mg(2+).

The catalysed reaction is dUTP + H2O = dUMP + diphosphate + H(+). Its pathway is pyrimidine metabolism; dUMP biosynthesis; dUMP from dCTP (dUTP route): step 2/2. In terms of biological role, this enzyme is involved in nucleotide metabolism: it produces dUMP, the immediate precursor of thymidine nucleotides and it decreases the intracellular concentration of dUTP so that uracil cannot be incorporated into DNA. The sequence is that of Deoxyuridine 5'-triphosphate nucleotidohydrolase from Paraburkholderia xenovorans (strain LB400).